We begin with the raw amino-acid sequence, 546 residues long: NAD(P)H-quinone oxidoreductase chain 4 (546 aa).

The next 14 membrane-spanning stretches (helical) occupy residues 17–37, 48–68, 103–123, 127–147, 149–169, 181–201, 222–242, 256–276, 290–310, 327–347, 348–368, 389–409, 430–450, and 477–497; these read VPWL…VPFI, WYAL…YLNG, LILL…PVSF, LFYF…AVQD, LLFF…LAIW, FILY…AMGF, GFQL…LPIV, TAPV…YALL, FAPL…LTSF, MGFV…GAML, QMIS…ATYD, FALW…SGFV, VVIC…LLSM, and VYII…PRLM.

The protein belongs to the complex I subunit 4 family.

Its subcellular location is the cellular thylakoid membrane. The enzyme catalyses a plastoquinone + NADH + (n+1) H(+)(in) = a plastoquinol + NAD(+) + n H(+)(out). It catalyses the reaction a plastoquinone + NADPH + (n+1) H(+)(in) = a plastoquinol + NADP(+) + n H(+)(out). In terms of biological role, NDH-1 shuttles electrons from NAD(P)H, via FMN and iron-sulfur (Fe-S) centers, to quinones in the respiratory chain. The immediate electron acceptor for the enzyme in this species is believed to be plastoquinone. Couples the redox reaction to proton translocation (for every two electrons transferred, four hydrogen ions are translocated across the cytoplasmic membrane), and thus conserves the redox energy in a proton gradient. This chain is NAD(P)H-quinone oxidoreductase chain 4, found in Parasynechococcus marenigrum (strain WH8102).